The sequence spans 336 residues: NADH-quinone oxidoreductase subunit H (336 aa).

8 helical membrane passes run 9–29 (LVWI…LTYA), 77–97 (FLFA…VIPF), 116–136 (LGVM…IIAG), 156–176 (ISYE…TGSL), 188–208 (LPYW…VSIL), 236–256 (IPFA…SSIM), 275–295 (IVPG…CFLI), and 315–335 (VFLP…AFNI).

It belongs to the complex I subunit 1 family. In terms of assembly, NDH-1 is composed of 14 different subunits. Subunits NuoA, H, J, K, L, M, N constitute the membrane sector of the complex.

The protein localises to the cell inner membrane. The catalysed reaction is a quinone + NADH + 5 H(+)(in) = a quinol + NAD(+) + 4 H(+)(out). Functionally, NDH-1 shuttles electrons from NADH, via FMN and iron-sulfur (Fe-S) centers, to quinones in the respiratory chain. The immediate electron acceptor for the enzyme in this species is believed to be ubiquinone. Couples the redox reaction to proton translocation (for every two electrons transferred, four hydrogen ions are translocated across the cytoplasmic membrane), and thus conserves the redox energy in a proton gradient. This subunit may bind ubiquinone. This is NADH-quinone oxidoreductase subunit H from Neorickettsia sennetsu (strain ATCC VR-367 / Miyayama) (Ehrlichia sennetsu).